The following is a 195-amino-acid chain: dITP/XTP pyrophosphatase (195 aa).

Residue 8–13 (SNNQGK) participates in substrate binding. Residues Glu39 and Asp68 each contribute to the Mg(2+) site. Catalysis depends on Asp68, which acts as the Proton acceptor. Residues Ser69, 149–152 (FGYD), Lys172, and 177–178 (HR) each bind substrate.

This sequence belongs to the HAM1 NTPase family. In terms of assembly, homodimer. Mg(2+) is required as a cofactor.

It catalyses the reaction XTP + H2O = XMP + diphosphate + H(+). It carries out the reaction dITP + H2O = dIMP + diphosphate + H(+). The catalysed reaction is ITP + H2O = IMP + diphosphate + H(+). Functionally, pyrophosphatase that catalyzes the hydrolysis of nucleoside triphosphates to their monophosphate derivatives, with a high preference for the non-canonical purine nucleotides XTP (xanthosine triphosphate), dITP (deoxyinosine triphosphate) and ITP. Seems to function as a house-cleaning enzyme that removes non-canonical purine nucleotides from the nucleotide pool, thus preventing their incorporation into DNA/RNA and avoiding chromosomal lesions. This is dITP/XTP pyrophosphatase from Staphylococcus aureus (strain COL).